Consider the following 951-residue polypeptide: Kinase suppressor of Ras 2 (951 aa).

Positions 237–298 (PPPPPLESGH…PGTPPPSSRK (62 aa)) are disordered. A compositionally biased stretch (low complexity) spans 260 to 274 (RTPPRTPNIVTTVTP). Thr-273 and Thr-277 each carry phosphothreonine. The Phorbol-ester/DAG-type zinc finger occupies 413-457 (KHRFSTKYWMSQTCTVCGKGMLFGLKCKNCKLKCHNKCTKEAPPC). 8 residues coordinate Zn(2+): His-414, Cys-426, Cys-429, Cys-439, Cys-442, His-447, Cys-450, and Cys-457. The residue at position 475 (Ser-475) is a Phosphoserine; by MARK3. Disordered stretches follow at residues 489–559 (RYSD…QKKN) and 614–634 (EPTS…DEFE). Residues 494–503 (HISQTLPKTN) show a composition bias toward polar residues. Thr-498 is modified (phosphothreonine). A compositionally biased stretch (low complexity) spans 518-531 (SSSNPSSTTSSTPS). Residues 532–552 (SPAPPLPPSATPPSPLHPSPQ) are compositionally biased toward pro residues. The 266-residue stretch at 667–932 (LEIGELIGKG…TKLMDMLEKL (266 aa)) folds into the Protein kinase domain. 673 to 681 (IGKGRFGQV) contributes to the ATP binding site. Asp-787 acts as the Proton donor/acceptor in catalysis. ATP-binding residues include Lys-789 and Asp-804.

This sequence belongs to the protein kinase superfamily. TKL Ser/Thr protein kinase family. In terms of assembly, heterodimerizes (via N-terminus) with BRAF (via N-terminus) in a MAP2K1/MEK1-dependent manner. Interacts with BRAF; this increases the low intrinsic protein kinase activity of KSR2. Interacts with MAP2K1, forming a heterodimer that can dimerize to form a heterotetramer. Interacts with MAP3K8, MAPK, RAS and RAF. In terms of processing, phosphorylated on Ser-475 by MARK3.

It is found in the cytoplasm. It localises to the membrane. The catalysed reaction is L-seryl-[protein] + ATP = O-phospho-L-seryl-[protein] + ADP + H(+). The enzyme catalyses L-threonyl-[protein] + ATP = O-phospho-L-threonyl-[protein] + ADP + H(+). Its function is as follows. Location-regulated scaffold connecting MEK to RAF. Has very low protein kinase activity and can phosphorylate MAP2K1 at several Ser and Thr residues with very low efficiency (in vitro). Acts as MAP2K1/MEK1-dependent allosteric activator of BRAF; upon binding to MAP2K1/MEK1, dimerizes with BRAF and promotes BRAF-mediated phosphorylation of MAP2K1/MEK1. Interaction with BRAF enhances KSR2-mediated phosphorylation of MAP2K1 (in vitro). Blocks MAP3K8 kinase activity and MAP3K8-mediated signaling. Acts as a negative regulator of MAP3K3-mediated activation of ERK, JNK and NF-kappa-B pathways, inhibiting MAP3K3-mediated interleukin-8 production. The polypeptide is Kinase suppressor of Ras 2 (Mus musculus (Mouse)).